A 223-amino-acid polypeptide reads, in one-letter code: MRVHLGGLAGAAALTGALSFVLLAAAIGTDFWYIIDTERLERTGPGAQDLLGSINRSQPEPLSSHSGLWRTCRVQSPCTPLMNPFRLENVTVSESSRQLLTMHGTFVILLPLSLILMVFGGMTGFLSFLLQAYLLLLLTGILFLFGAMVTLAGISVYIAYSAAAFREALCLLEEKALLDQVDISFGWSLALGWISFIAELLTGAAFLAAARELSLRRRQDQAI.

The chain crosses the membrane as a helical span at residues glycine 7–isoleucine 27. Residues asparagine 55 and asparagine 89 are each glycosylated (N-linked (GlcNAc...) asparagine). 3 consecutive transmembrane segments (helical) span residues phenylalanine 106–leucine 126, leucine 134–isoleucine 154, and leucine 189–alanine 209.

Belongs to the PMP-22/EMP/MP20 family.

It is found in the cell junction. Its subcellular location is the tight junction. It localises to the lateral cell membrane. The protein resides in the apical cell membrane. This Homo sapiens (Human) protein is Transmembrane protein 114.